The sequence spans 562 residues: Dihydroxy-acid dehydratase (562 aa).

Position 51 (Cys-51) interacts with [2Fe-2S] cluster. A Mg(2+)-binding site is contributed by Asp-83. Residue Cys-124 coordinates [2Fe-2S] cluster. 2 residues coordinate Mg(2+): Asp-125 and Lys-126. At Lys-126 the chain carries N6-carboxylysine. Cys-196 is a [2Fe-2S] cluster binding site. Residue Glu-448 participates in Mg(2+) binding. Ser-474 acts as the Proton acceptor in catalysis.

This sequence belongs to the IlvD/Edd family. Homodimer. [2Fe-2S] cluster serves as cofactor. The cofactor is Mg(2+).

The enzyme catalyses (2R)-2,3-dihydroxy-3-methylbutanoate = 3-methyl-2-oxobutanoate + H2O. The catalysed reaction is (2R,3R)-2,3-dihydroxy-3-methylpentanoate = (S)-3-methyl-2-oxopentanoate + H2O. It participates in amino-acid biosynthesis; L-isoleucine biosynthesis; L-isoleucine from 2-oxobutanoate: step 3/4. Its pathway is amino-acid biosynthesis; L-valine biosynthesis; L-valine from pyruvate: step 3/4. Functions in the biosynthesis of branched-chain amino acids. Catalyzes the dehydration of (2R,3R)-2,3-dihydroxy-3-methylpentanoate (2,3-dihydroxy-3-methylvalerate) into 2-oxo-3-methylpentanoate (2-oxo-3-methylvalerate) and of (2R)-2,3-dihydroxy-3-methylbutanoate (2,3-dihydroxyisovalerate) into 2-oxo-3-methylbutanoate (2-oxoisovalerate), the penultimate precursor to L-isoleucine and L-valine, respectively. In Pyrobaculum aerophilum (strain ATCC 51768 / DSM 7523 / JCM 9630 / CIP 104966 / NBRC 100827 / IM2), this protein is Dihydroxy-acid dehydratase.